A 909-amino-acid polypeptide reads, in one-letter code: MLSNLLKSIFGSRNDRLIKQYLKIVRTINELEAAISPLSDEELRAKTSEFKQRVANGEKLDQLLPEAFAVVREAGKRVLGMRHFDVQLIGGMVLHEGKIAEMRTGEGKTLMATLPTYLNALSGKGVHIVTVNDYLAKRDAEWMGQIYRFLGLTVGVVLSQMPHEEKQAAYAADITYGTNNEYGFDYLRDNMVGHSAERVQRVLNFAIVDEVDSILIDEARTPLIISGMAEGDTEIYKRIDTLIPGLTRQEDEKSPGDYSVDEKTQQVLLSEEGFEHAEKLLSEAGLLSAGSSLYDPMNVSLIHHLNAALRARALYNRDQHYVVQNGEVIIVDEFTGRLMPGRRWSEGLHQAVEAKENVPIQKENQTLASITFQNYFRMYEKLAGMTGTADTEAFEFQQIYGLETVVIPTHRPMTREDRMDQVFRTPQEKYQAIIADIKDCYERKQPVLVGTTSIENNELLAALLTKEKLPHQVLNAKQHAREADIIAQAGQPKMVTIATNMAGRGTDIVLGGNPEQEINRIRADETLDEAAKSKKIEEIHQAWQARHDEVIKLGGLHIIGTERHESRRIDNQLRGRAGRQGDPGSSRFYLSLEDPLLRIFSSDRVANIMTRLKMPEGEAIEHPWVTRAIENAQRKVEARNFDIRKQLLEYDDVANDQRKVIYQQRNELLDAEQGVSETISAIRESVVHQLIDRYIPEQSIEEQWDIPGLEKALASEFHLQIPLQKWLEEDSELHEENLHDRIIELVDTSYLNKVEQVGAPIMHQYERMIMLHSIDTHWREHLAALDHLRQGIHLRGYAQQNPKQEYKREAFELFTSMLDAIKADVTKILMTVQIRSEQQVESVAETSALRNLEYHHDTHSELAEEQPPVAENRENKQQPFVRKNEKVGRNDPCPCGSGKKYKQCHGKLN.

ATP is bound by residues Gln87, 105–109 (GEGKT), and Asp507. A disordered region spans residues 857-909 (DTHSELAEEQPPVAENRENKQQPFVRKNEKVGRNDPCPCGSGKKYKQCHGKLN). The span at 871–889 (ENRENKQQPFVRKNEKVGR) shows a compositional bias: basic and acidic residues. Zn(2+) is bound by residues Cys893, Cys895, Cys904, and His905. Residues 899 to 909 (KKYKQCHGKLN) are compositionally biased toward basic residues.

The protein belongs to the SecA family. Monomer and homodimer. Part of the essential Sec protein translocation apparatus which comprises SecA, SecYEG and auxiliary proteins SecDF-YajC and YidC. Zn(2+) serves as cofactor.

The protein localises to the cell inner membrane. The protein resides in the cytoplasm. It catalyses the reaction ATP + H2O + cellular proteinSide 1 = ADP + phosphate + cellular proteinSide 2.. Part of the Sec protein translocase complex. Interacts with the SecYEG preprotein conducting channel. Has a central role in coupling the hydrolysis of ATP to the transfer of proteins into and across the cell membrane, serving both as a receptor for the preprotein-SecB complex and as an ATP-driven molecular motor driving the stepwise translocation of polypeptide chains across the membrane. The sequence is that of Protein translocase subunit SecA from Nitrosomonas europaea (strain ATCC 19718 / CIP 103999 / KCTC 2705 / NBRC 14298).